Consider the following 438-residue polypeptide: Glutaryl-CoA dehydrogenase, mitochondrial (438 aa).

Residues 1–44 constitute a mitochondrion transit peptide; sequence MALRGVSVRLLSRGPGLHVLRTWVSSAAQTEKGGRTQSQLAKSS. Substrate is bound by residues 138 to 139 and serine 186; that span reads RS. Residues 177–186 and 212–214 each bind FAD; these read FGLTEPNSGS and WIT. Lysine 240 bears the N6-acetyllysine mark. Position 287-294 (287-294) interacts with substrate; sequence FGCLNNAR. FAD-binding positions include arginine 319, glutamine 330, and 387 to 391; that span reads DMLGG. The active-site Proton acceptor is the glutamate 414. Glycine 415 contributes to the substrate binding site. Residues 416–418 and phenylalanine 434 contribute to the FAD site; that span reads THD.

The protein belongs to the acyl-CoA dehydrogenase family. As to quaternary structure, homotetramer. The cofactor is FAD. Isoform Long and isoform Short are expressed in fibroblasts and liver.

The protein localises to the mitochondrion matrix. It carries out the reaction glutaryl-CoA + oxidized [electron-transfer flavoprotein] + 2 H(+) = (2E)-butenoyl-CoA + reduced [electron-transfer flavoprotein] + CO2. The protein operates within amino-acid metabolism; lysine degradation. Its pathway is amino-acid metabolism; tryptophan metabolism. With respect to regulation, strongly inhibited by MCPA-CoA, a metabolite of hypoglycin which is present in unripened fruit of the ackee tree. In terms of biological role, catalyzes the oxidative decarboxylation of glutaryl-CoA to crotonyl-CoA and CO(2) in the degradative pathway of L-lysine, L-hydroxylysine, and L-tryptophan metabolism. It uses electron transfer flavoprotein as its electron acceptor. Isoform Short is inactive. This is Glutaryl-CoA dehydrogenase, mitochondrial (GCDH) from Homo sapiens (Human).